Reading from the N-terminus, the 158-residue chain is NAD(P)H-quinone oxidoreductase subunit J, chloroplastic (158 aa).

This sequence belongs to the complex I 30 kDa subunit family. In terms of assembly, NDH is composed of at least 16 different subunits, 5 of which are encoded in the nucleus.

The protein localises to the plastid. Its subcellular location is the chloroplast thylakoid membrane. It catalyses the reaction a plastoquinone + NADH + (n+1) H(+)(in) = a plastoquinol + NAD(+) + n H(+)(out). It carries out the reaction a plastoquinone + NADPH + (n+1) H(+)(in) = a plastoquinol + NADP(+) + n H(+)(out). Its function is as follows. NDH shuttles electrons from NAD(P)H:plastoquinone, via FMN and iron-sulfur (Fe-S) centers, to quinones in the photosynthetic chain and possibly in a chloroplast respiratory chain. The immediate electron acceptor for the enzyme in this species is believed to be plastoquinone. Couples the redox reaction to proton translocation, and thus conserves the redox energy in a proton gradient. The chain is NAD(P)H-quinone oxidoreductase subunit J, chloroplastic from Arabis hirsuta (Hairy rock-cress).